Reading from the N-terminus, the 139-residue chain is MNNNQGMYNTQTTQGYGNNQGSYQNQMMYNNNNPQNTQTTTFLYASSIQPQQQQQQQQYNNQYNNQQMNSNGYNNQPMYDQSYSTQQYGSSTPSPQYSADSISCCSQVSSTCCYQTQQGYNTPSNNVQYSPSVYQYGRK.

Residues M1–T12 are compositionally biased toward polar residues. The disordered stretch occupies residues M1–S98. Low complexity-rich tracts occupy residues T13–T41 and Q49–S98.

This is Intrinsically disordered protein, expressed in pharynx 15 from Caenorhabditis elegans.